Reading from the N-terminus, the 110-residue chain is UPF0060 membrane protein Bcep1808_1236 (110 aa).

3 consecutive transmembrane segments (helical) span residues 9-29 (ALFAVTAVAEIVGCYLPWLVL), 34-54 (PVWLLVPAALSLALFAWLLTL), and 66-86 (YGGVYIGVALLWLRVVDGVAL).

Belongs to the UPF0060 family.

The protein localises to the cell inner membrane. The chain is UPF0060 membrane protein Bcep1808_1236 from Burkholderia vietnamiensis (strain G4 / LMG 22486) (Burkholderia cepacia (strain R1808)).